Here is a 293-residue protein sequence, read N- to C-terminus: Probable tRNA-splicing endonuclease subunit Sen2 (293 aa).

Active-site residues include Tyr157, His165, and Lys204. The chain crosses the membrane as a helical span at residues 267 to 287; that stretch reads VVFNHWGVILGFTVLSGLLVY.

This sequence belongs to the tRNA-intron endonuclease family. TRNA splicing endonuclease is a heterotetramer composed of SEN2, SEN15, SEN34/LENG5 and SEN54.

The protein localises to the nucleus. It localises to the membrane. It carries out the reaction pretRNA = a 3'-half-tRNA molecule with a 5'-OH end + a 5'-half-tRNA molecule with a 2',3'-cyclic phosphate end + an intron with a 2',3'-cyclic phosphate and a 5'-hydroxyl terminus.. In terms of biological role, constitutes one of the two catalytic subunit of the tRNA-splicing endonuclease complex, a complex responsible for identification and cleavage of the splice sites in pre-tRNA. It cleaves pre-tRNA at the 5'- and 3'-splice sites to release the intron. The products are an intron and two tRNA half-molecules bearing 2',3'-cyclic phosphate and 5'-OH termini. There are no conserved sequences at the splice sites, but the intron is invariably located at the same site in the gene, placing the splice sites an invariant distance from the constant structural features of the tRNA body. Probably carries the active site for 5'-splice site cleavage. This Oryza sativa subsp. japonica (Rice) protein is Probable tRNA-splicing endonuclease subunit Sen2.